Reading from the N-terminus, the 465-residue chain is Cysteine--tRNA ligase (465 aa).

Residue C30 participates in Zn(2+) binding. The short motif at 32–42 (MTVYDYCHVGH) is the 'HIGH' region element. Residues C214, H239, and E243 each coordinate Zn(2+). The 'KMSKS' region motif lies at 271–275 (KMSKS). K274 serves as a coordination point for ATP.

Belongs to the class-I aminoacyl-tRNA synthetase family. As to quaternary structure, monomer. It depends on Zn(2+) as a cofactor.

Its subcellular location is the cytoplasm. The enzyme catalyses tRNA(Cys) + L-cysteine + ATP = L-cysteinyl-tRNA(Cys) + AMP + diphosphate. The polypeptide is Cysteine--tRNA ligase (Ralstonia nicotianae (strain ATCC BAA-1114 / GMI1000) (Ralstonia solanacearum)).